Consider the following 1153-residue polypeptide: uncharacterized protein (1153 aa).

Disordered stretches follow at residues 164-193 (TTIK…QIDD), 224-245 (DNYD…DDDK), 294-316 (KSPQ…QSKH), 332-427 (EHKL…KNKK), 613-648 (LSML…EGEN), 683-703 (QQQQ…EEMS), 717-740 (KSDD…SKRK), 772-819 (NKKL…KTIE), 838-874 (ASSG…EDEK), and 942-1106 (NNNN…NNEV). Pro residues predominate over residues 169 to 179 (LPPPLPQPQPQ). 4 stretches are compositionally biased toward low complexity: residues 231-240 (NNNNNNNNSN), 298-312 (KLKL…QQQK), 336-391 (QQQQ…TPKK), and 399-423 (NNVN…NNNN). Residues 613 to 625 (LSMLDSTNDGSSQ) are compositionally biased toward polar residues. Residues 687-699 (QEKEKQQQEKQQD) show a composition bias toward basic and acidic residues. The span at 721–734 (NNNNNDNNNNNNNN) shows a compositional bias: low complexity. Over residues 772-784 (NKKLRVDSEDQQT) the composition is skewed to basic and acidic residues. 2 stretches are compositionally biased toward low complexity: residues 788-808 (TTTT…NNNN) and 839-854 (SSGG…QNDS). Over residues 856–874 (TTKEKERSETIKTHNEDEK) the composition is skewed to basic and acidic residues. Residues 942-987 (NNNNNNNNNINNINNIGNKNTTVNNSNHSNHSNNNINNNNIFKNSN) show a composition bias toward low complexity. 2 stretches are compositionally biased toward polar residues: residues 988-998 (PIVDTNFSSTT) and 1005-1015 (QSKIFTGNQLP). Over residues 1019–1059 (INNENVVNNNNNNEINNTTTTTTNNNSGIHKNNNNYNSDNS) the composition is skewed to low complexity. Positions 1064-1081 (DGLKQEKEEQKEEQKENK) are enriched in basic and acidic residues. Low complexity predominate over residues 1082–1105 (NNNNNNNNNNNNNNNNNNNNNNNE).

This is an uncharacterized protein from Dictyostelium discoideum (Social amoeba).